The sequence spans 438 residues: Transmembrane protein 184C (438 aa).

The next 7 helical transmembrane spans lie at 17 to 37 (LAVV…VWEL), 48 to 68 (AWFI…WVIL), 86 to 106 (ILWM…YPSI), 176 to 196 (VLQY…CELL), 212 to 232 (YLVI…LLFY), 254 to 274 (VVFV…VGVI), and 287 to 307 (AVAT…AAIA). The interval 358–438 (PRKKFFPEDQ…EEPSEKPVAS (81 aa)) is disordered. Composition is skewed to low complexity over residues 374 to 390 (SLLS…ASSV) and 404 to 413 (TVTPQTTPTT). Basic and acidic residues predominate over residues 426 to 438 (GVREEPSEKPVAS).

The protein belongs to the TMEM184 family.

The protein localises to the membrane. Its function is as follows. Possible tumor suppressor which may play a role in cell growth. In Bos taurus (Bovine), this protein is Transmembrane protein 184C (TMEM184C).